The following is a 1221-amino-acid chain: DNA-directed RNA polymerase subunit beta' (1221 aa).

Residues C60, C62, C75, and C78 each coordinate Zn(2+). Residues D449, D451, and D453 each contribute to the Mg(2+) site. The Zn(2+) site is built by C820, C894, C901, and C904.

The protein belongs to the RNA polymerase beta' chain family. The RNAP catalytic core consists of 2 alpha, 1 beta, 1 beta' and 1 omega subunit. When a sigma factor is associated with the core the holoenzyme is formed, which can initiate transcription. Requires Mg(2+) as cofactor. It depends on Zn(2+) as a cofactor.

It carries out the reaction RNA(n) + a ribonucleoside 5'-triphosphate = RNA(n+1) + diphosphate. DNA-dependent RNA polymerase catalyzes the transcription of DNA into RNA using the four ribonucleoside triphosphates as substrates. In Ligilactobacillus salivarius (strain UCC118) (Lactobacillus salivarius), this protein is DNA-directed RNA polymerase subunit beta'.